The following is a 211-amino-acid chain: Large ribosomal subunit protein bL25 (211 aa).

Residues 188-211 (APKAAKVSTDDEAAAPAEEAPAAE) are disordered. Over residues 201–211 (AAPAEEAPAAE) the composition is skewed to low complexity.

The protein belongs to the bacterial ribosomal protein bL25 family. CTC subfamily. Part of the 50S ribosomal subunit; part of the 5S rRNA/L5/L18/L25 subcomplex. Contacts the 5S rRNA. Binds to the 5S rRNA independently of L5 and L18.

Its function is as follows. This is one of the proteins that binds to the 5S RNA in the ribosome where it forms part of the central protuberance. The chain is Large ribosomal subunit protein bL25 from Colwellia psychrerythraea (strain 34H / ATCC BAA-681) (Vibrio psychroerythus).